The following is a 2754-amino-acid chain: Neurobeachin-like protein 2 (2754 aa).

2 disordered regions span residues 1298–1338 (TAGS…SEAP) and 1364–1438 (SVGS…QQTS). Pro residues-rich tracts occupy residues 1301–1323 (SPPPSSPESPTSPKPAPPKPPTE) and 1388–1400 (TPSPLDGPRPFPA). The span at 1425–1437 (GDDTSNTSNPQQT) shows a compositional bias: polar residues. S1647 carries the phosphoserine modification. T1867 carries the post-translational modification Phosphothreonine. The region spanning 1915–2040 (EQREKLVLSA…VRNQVYSWLL (126 aa)) is the BEACH-type PH domain. The BEACH domain occupies 2053–2345 (RSPQEMLRAS…QLLKEPHPTR (293 aa)). WD repeat units lie at residues 2386–2424 (LVLALVPHRQPHSFITQGSPDLLVTVSASGLLGTHSWLP), 2448–2491 (RLLS…ALPR), 2494–2531 (LLSQLSCHLDVVTCLALDTCGIYLISGSRDTTCMVWRL), 2544–2582 (KPVQVLYGHGAAVSCVAISTELDMAVSGSEDGTVIIHTV), 2589–2631 (AALR…TYSL), 2639–2674 (KLRASLPLAEQPTALTVTEDFVLLGTAQCALHILQL), and 2682–2717 (PPLPMKVAIRSVAVTKERSHVLVGLEDGKLIVVVAG). A phosphoserine mark is found at S2739 and S2742.

It belongs to the WD repeat neurobeachin family. In terms of tissue distribution, expressed in megakaryocytes.

The protein localises to the endoplasmic reticulum. In terms of biological role, probably involved in thrombopoiesis. Plays a role in the development or secretion of alpha-granules, that contain several growth factors important for platelet biogenesis. In Homo sapiens (Human), this protein is Neurobeachin-like protein 2 (NBEAL2).